Consider the following 61-residue polypeptide: Small ribosomal subunit protein uS14 (61 aa).

Residues Cys-24, Cys-27, Cys-40, and Cys-43 each contribute to the Zn(2+) site.

Belongs to the universal ribosomal protein uS14 family. Zinc-binding uS14 subfamily. Part of the 30S ribosomal subunit. Contacts proteins S3 and S10. The cofactor is Zn(2+).

Functionally, binds 16S rRNA, required for the assembly of 30S particles and may also be responsible for determining the conformation of the 16S rRNA at the A site. The protein is Small ribosomal subunit protein uS14 of Mycoplasma pneumoniae (strain ATCC 29342 / M129 / Subtype 1) (Mycoplasmoides pneumoniae).